Here is a 284-residue protein sequence, read N- to C-terminus: Shikimate kinase (284 aa).

Residue 85 to 95 (PLAAGLKSSSA) coordinates ATP.

The protein belongs to the GHMP kinase family. Archaeal shikimate kinase subfamily.

Its subcellular location is the cytoplasm. It carries out the reaction shikimate + ATP = 3-phosphoshikimate + ADP + H(+). The protein operates within metabolic intermediate biosynthesis; chorismate biosynthesis; chorismate from D-erythrose 4-phosphate and phosphoenolpyruvate: step 5/7. The chain is Shikimate kinase from Halobacterium salinarum (strain ATCC 29341 / DSM 671 / R1).